The primary structure comprises 364 residues: MWNATPSEEPEPNVTLDLDWDASPGNDSLPDELLPLFPAPLLAGVTATCVALFVVGISGNLLTMLVVSRFRELRTTTNLYLSSMAFSDLLIFLCMPLDLVRLWQYRPWNFGDLLCKLFQFVSESCTYATVLTITALSVERYFAICFPLRAKVVVTKGRVKLVILVIWAVAFCSAGPIFVLVGVEHENGTDPRDTNECRATEFAVRSGLLTVMVWVSSVFFFLPVFCLTVLYSLIGRKLWRRRGDAAVGASLRDQNHKQTVKMLAVVVFAFILCWLPFHVGRYLFSKSFEPGSLEIAQISQYCNLVSFVLFYLSAAINPILYNIMSKKYRVAVFKLLGFESFSQRKLSTLKDESSRAWTKSSINT.

The Extracellular portion of the chain corresponds to methionine 1–proline 40. 2 N-linked (GlcNAc...) asparagine glycosylation sites follow: asparagine 13 and asparagine 26. The helical transmembrane segment at leucine 41 to valine 66 threads the bilayer. At valine 67–glutamate 72 the chain is on the cytoplasmic side. The chain crosses the membrane as a helical span at residues leucine 73–proline 96. The Extracellular portion of the chain corresponds to leucine 97–leucine 117. A disulfide bridge connects residues cysteine 115 and cysteine 197. Residues phenylalanine 118–glutamate 139 traverse the membrane as a helical segment. Over arginine 140–valine 162 the chain is Cytoplasmic. Residues isoleucine 163–valine 183 form a helical membrane-spanning segment. The Extracellular portion of the chain corresponds to glutamate 184–valine 211. N-linked (GlcNAc...) asparagine glycosylation occurs at asparagine 187. Residues methionine 212 to glycine 235 form a helical membrane-spanning segment. At arginine 236–leucine 263 the chain is on the cytoplasmic side. Residues alanine 264–serine 285 traverse the membrane as a helical segment. Residues lysine 286–cysteine 302 are Extracellular-facing. The chain crosses the membrane as a helical span at residues asparagine 303–lysine 326. Over lysine 327 to threonine 364 the chain is Cytoplasmic.

The protein belongs to the G-protein coupled receptor 1 family.

The protein resides in the cell membrane. In terms of biological role, receptor for ghrelin, coupled to G-alpha-11 proteins. Stimulates growth hormone secretion. Also binds other growth hormone releasing peptides (GHRP) (e.g. Met-enkephalin and GHRP-6) as well as non-peptide, low molecular weight secretagogues (e.g. L-692,429, MK-0677, adenosine). The polypeptide is Growth hormone secretagogue receptor type 1 (Ghsr) (Rattus norvegicus (Rat)).